A 220-amino-acid chain; its full sequence is Transmembrane emp24 domain-containing protein 1 (220 aa).

The signal sequence occupies residues 1–19; it reads MAWSSSFLFIVLPLAAAVA. Residues 20 to 187 are Extracellular-facing; the sequence is VQPQDTELTF…LQDSNLERVN (168 aa). In terms of domain architecture, GOLD spans 36–118; that stretch reads QECFYQTTLY…EKLVFFELIF (83 aa). A coiled-coil region spans residues 138–164; sequence ELLDIKLEDIKESIESVKSRLERSIQM. The chain crosses the membrane as a helical span at residues 188-208; that stretch reads FWSAINVGVLVTVAFLQVYML. Residues 209-220 lie on the Cytoplasmic side of the membrane; that stretch reads KSLFDDKRKIRT. The short motif at 211 to 212 is the COPII vesicle coat-binding element; it reads LF. The COPI vesicle coat-binding signature appears at 211 to 220; the sequence is LFDDKRKIRT.

This sequence belongs to the EMP24/GP25L family. Homodimer in endoplasmic reticulum, endoplasmic reticulum-Golgi intermediate compartment and cis-Golgi network. Interacts with IL1RL1. Interacts with RNF26; this interaction is important to modulate innate immune signaling through the cGAS-STING pathway.

It is found in the cell membrane. Its subcellular location is the endoplasmic reticulum membrane. It localises to the golgi apparatus. The protein resides in the cis-Golgi network membrane. The protein localises to the endoplasmic reticulum-Golgi intermediate compartment membrane. In terms of biological role, potential role in vesicular protein trafficking, mainly in the early secretory pathway. May act as a cargo receptor at the lumenal side for incorporation of secretory cargo molecules into transport vesicles and may be involved in vesicle coat formation at the cytoplasmic side. Plays a positive role in IL-33-mediated IL-8 and IL-6 production by interacting with interleukin-33 receptor IL1RL1. Plays also a role in the modulation of innate immune signaling through the cGAS-STING pathway by interacting with RNF26. The chain is Transmembrane emp24 domain-containing protein 1 (tmed1) from Xenopus tropicalis (Western clawed frog).